A 2439-amino-acid polypeptide reads, in one-letter code: Mucin-6 (2439 aa).

The signal sequence occupies residues 1–22 (MVQRWLLLSCCGALLSAGLANT). Positions 43–214 (GQCSTWGAGH…KLDDPGEICT (172 aa)) constitute a VWFD 1 domain. Disulfide bonds link Cys-45-Cys-176 and Cys-67-Cys-213. Residue Asn-268 is glycosylated (N-linked (GlcNAc...) asparagine). The TIL domain maps to 302 to 357 (CPANQVYQECGSACVKTCSNPQHSCSSSCTFGCFCPEGTVLNDLSNNHTCVPVTQC). Positions 395–579 (GHCSLEGGSF…ALERETDPCS (185 aa)) constitute a VWFD 2 domain. Disulfide bonds link Cys-397–Cys-533 and Cys-419–Cys-578. Residues Asn-486 and Asn-659 are each glycosylated (N-linked (GlcNAc...) asparagine). The VWFD 3 domain occupies 866–1038 (STCTLYGEGH…NSWKESPLCG (173 aa)). Intrachain disulfides connect Cys-868–Cys-1002, Cys-890–Cys-1037, Cys-899–Cys-999, and Cys-917–Cys-924. N-linked (GlcNAc...) asparagine glycans are attached at residues Asn-975 and Asn-1179. Disordered stretches follow at residues 1202–1455 (PQPP…TSLV), 1471–1626 (ATSA…LVTP), 1642–1834 (SASI…HPHT), 1868–1983 (SIHS…STGP), 2033–2077 (ATSA…THSS), 2090–2196 (SSSW…SASP), 2233–2278 (VSPT…SLTT), and 2323–2348 (LTAH…SPGV). Positions 1224-1265 (TGTSTTIGLLSSTGPSPSSNHTPASPTQTPLLPATLTSSKPT) are enriched in low complexity. The span at 1276–1286 (TAVTPQATSGL) shows a compositional bias: polar residues. Residues 1294 to 1339 (STATKPTVTQATTRATASTASPATTSTAQSTTRTTMTLPTPATSGT) show a composition bias toward low complexity. Positions 1340-1351 (SPTLPKSTNQEL) are enriched in polar residues. Composition is skewed to low complexity over residues 1352–1373 (PGTT…TGPT) and 1381–1415 (TRPT…AGSP). Polar residues-rich tracts occupy residues 1416–1455 (VPST…TSLV), 1471–1481 (ATSASNHSAPT), and 1490–1520 (LKAT…STNK). Low complexity-rich tracts occupy residues 1521 to 1567 (TPTS…ATSS) and 1574 to 1611 (TTHS…PQTT). The 1; truncated repeat unit spans residues 1561–1738 (TNSATSSRPP…TTSGTSQSRS (178 aa)). The approximate repeats stretch occupies residues 1607-1953 (HPQTTLPTHV…STGTRTPVAH (347 aa)). Positions 1659 to 1686 (LKATGSTHTAPTMTLTTSGTSQALSSLN) are enriched in polar residues. A compositionally biased stretch (low complexity) spans 1687-1768 (TAKTSTSLHS…PEVTSTSTTS (82 aa)). The segment covering 1769 to 1793 (ITPNHTSTGTRTPVAHTTSATSSRL) has biased composition (polar residues). Repeat unit 2 spans residues 1785–1953 (TTSATSSRLP…STGTRTPVAH (169 aa)). 2 stretches are compositionally biased toward low complexity: residues 1794-1834 (PTPF…HPHT) and 1891-1917 (TAPP…TSTS). A compositionally biased stretch (polar residues) spans 1918 to 1962 (LPYHTSSTHHPEVTPTSTTNITPKHTSTGTRTPVAHTTSASSSRL). A compositionally biased stretch (low complexity) spans 1963-1983 (PTPFTTHSPPTGSSPFSSTGP). A compositionally biased stretch (polar residues) spans 2052 to 2070 (LKATGSTHTAPPMTVTTSG). Positions 2090–2102 (SSSWLPQNSSSRP) are enriched in low complexity. Positions 2107 to 2120 (ITTQLPHLSSATTP) are enriched in polar residues. A compositionally biased stretch (low complexity) spans 2121-2196 (VSTTNQLSSS…PTTASVSASP (76 aa)). Residues 2240 to 2264 (HLASSTIAFPSTPRTTASTHTAPAF) show a composition bias toward polar residues. Low complexity predominate over residues 2265–2278 (SSQSTTSRSTSLTT). Polar residues predominate over residues 2323-2347 (LTAHGSTPASAPVSSLGTPTPTSPG). Intrachain disulfides connect Cys-2349–Cys-2396, Cys-2363–Cys-2410, Cys-2372–Cys-2430, and Cys-2376–Cys-2432. Residues 2349–2438 (CSVREQQEEI…HCVCSSVACG (90 aa)) enclose the CTCK domain.

Multimer; disulfide-linked. In terms of processing, O-glycosylated. In terms of tissue distribution, expressed in the regenerative zone of gastric antrum, gastric body mucosa and gastric incisura mucosa. Expressed in the deeper mucous glands of gastric antrum. Overexpressed in Helicobacter pylori infected gastric epithelium. Highly expressed in duodenal Brunner's glands, gall bladder, seminal vesicle, pancreatic centroacinar cells and ducts, and periductal glands of the common bile duct.

Its subcellular location is the secreted. Its function is as follows. May provide a mechanism for modulation of the composition of the protective mucus layer related to acid secretion or the presence of bacteria and noxious agents in the lumen. Plays an important role in the cytoprotection of epithelial surfaces and are used as tumor markers in a variety of cancers. May play a role in epithelial organogenesis. This is Mucin-6 (MUC6) from Homo sapiens (Human).